Consider the following 440-residue polypeptide: Histidinol dehydrogenase (440 aa).

NAD(+)-binding residues include Tyr-139, Gln-200, and Asn-223. Ser-246, Gln-268, and His-271 together coordinate substrate. 2 residues coordinate Zn(2+): Gln-268 and His-271. Residues Glu-336 and His-337 each act as proton acceptor in the active site. Positions 337, 370, 424, and 429 each coordinate substrate. Position 370 (Asp-370) interacts with Zn(2+). His-429 is a binding site for Zn(2+).

It belongs to the histidinol dehydrogenase family. Zn(2+) serves as cofactor.

The catalysed reaction is L-histidinol + 2 NAD(+) + H2O = L-histidine + 2 NADH + 3 H(+). The protein operates within amino-acid biosynthesis; L-histidine biosynthesis; L-histidine from 5-phospho-alpha-D-ribose 1-diphosphate: step 9/9. Functionally, catalyzes the sequential NAD-dependent oxidations of L-histidinol to L-histidinaldehyde and then to L-histidine. The chain is Histidinol dehydrogenase from Bordetella bronchiseptica (strain ATCC BAA-588 / NCTC 13252 / RB50) (Alcaligenes bronchisepticus).